A 468-amino-acid polypeptide reads, in one-letter code: ATP synthase subunit beta (468 aa).

ATP is bound at residue 155 to 162; the sequence is GGAGVGKT.

This sequence belongs to the ATPase alpha/beta chains family. As to quaternary structure, F-type ATPases have 2 components, CF(1) - the catalytic core - and CF(0) - the membrane proton channel. CF(1) has five subunits: alpha(3), beta(3), gamma(1), delta(1), epsilon(1). CF(0) has three main subunits: a(1), b(2) and c(9-12). The alpha and beta chains form an alternating ring which encloses part of the gamma chain. CF(1) is attached to CF(0) by a central stalk formed by the gamma and epsilon chains, while a peripheral stalk is formed by the delta and b chains.

The protein localises to the cell membrane. The enzyme catalyses ATP + H2O + 4 H(+)(in) = ADP + phosphate + 5 H(+)(out). Its function is as follows. Produces ATP from ADP in the presence of a proton gradient across the membrane. The catalytic sites are hosted primarily by the beta subunits. This chain is ATP synthase subunit beta, found in Bacillus cereus (strain B4264).